Consider the following 1097-residue polypeptide: Mitochondrial distribution and morphology protein 34 (1097 aa).

The SMP-LTD domain occupies 1–198 (MSFNFKWPTF…LPGIIHRLSQ (198 aa)). Disordered stretches follow at residues 204–305 (EAKS…PLHS), 317–343 (AAFPDIENYDPTYGLRPDDLPTHSGFS), 390–427 (QSDDEGSEAEQSQDAHSSSHDGKHDEGDATTDSDLDAV), 480–520 (DDQP…TSSL), 556–600 (PEVD…SSRT), 645–675 (LDAERSSVSGSDSRRGLTNPTSRESSYRDLS), 716–817 (GQNA…SPGV), and 923–1097 (GSSA…AIRE). Residues 205–229 (AKSEKDKVKQKAEAEEPPARSREPT) are compositionally biased toward basic and acidic residues. Residues 252-263 (RKSHSKAKKHSR) show a composition bias toward basic residues. A compositionally biased stretch (low complexity) spans 274–283 (SPCQSPQRPR). The span at 284-293 (QSPRRPRHVA) shows a compositional bias: basic residues. Positions 406–416 (SSSHDGKHDEG) are enriched in basic and acidic residues. 2 stretches are compositionally biased toward low complexity: residues 508-519 (SSRSDRSACTSS) and 572-586 (GGTPSTRTGTTRFGS). The span at 662–675 (TNPTSRESSYRDLS) shows a compositional bias: polar residues. Over residues 759 to 779 (GMSATPARTRASAAASARSRP) the composition is skewed to low complexity. A compositionally biased stretch (polar residues) spans 784–796 (YATSPPGDSSGWQ). The span at 923 to 943 (GSSAASGTGTTSGSSQTGANA) shows a compositional bias: low complexity. Positions 1004 to 1024 (SNKPNNTSTGQGEDSQDNSAA) are enriched in polar residues. Residues 1045 to 1059 (ASGSSASSAITDSSS) are compositionally biased toward low complexity.

This sequence belongs to the MDM34 family. In terms of assembly, component of the ER-mitochondria encounter structure (ERMES) or MDM complex, composed of MMM1, MDM10, MDM12 and MDM34.

It is found in the mitochondrion outer membrane. In terms of biological role, component of the ERMES/MDM complex, which serves as a molecular tether to connect the endoplasmic reticulum (ER) and mitochondria. Components of this complex are involved in the control of mitochondrial shape and protein biogenesis, and function in nonvesicular lipid trafficking between the ER and mitochondria. MDM34 is required for the interaction of the ER-resident membrane protein MMM1 and the outer mitochondrial membrane-resident beta-barrel protein MDM10. The polypeptide is Mitochondrial distribution and morphology protein 34 (Mycosarcoma maydis (Corn smut fungus)).